Here is a 701-residue protein sequence, read N- to C-terminus: Interleukin-1 receptor accessory protein-like 1-A (701 aa).

The signal sequence occupies residues M1 to S19. The Extracellular segment spans residues L20–T361. Positions T33 to S133 constitute an Ig-like C2-type 1 domain. C54 and C121 are joined by a disulfide. N64, N125, N141, N216, N267, and N334 each carry an N-linked (GlcNAc...) asparagine glycan. 2 consecutive Ig-like C2-type domains span residues C146–S235 and P245–G353. The cysteines at positions 167 and 219 are disulfide-linked. A disulfide bond links C270 and C337. Residues V362 to Y382 form a helical membrane-spanning segment. At K383–W701 the chain is on the cytoplasmic side. Residues K407–M563 enclose the TIR domain. E495 is a catalytic residue. The tract at residues P568 to W701 is required for synaptic vesicle accumulation during synaptogenesis.

Belongs to the interleukin-1 receptor family.

It localises to the cell membrane. The protein resides in the cytoplasm. It catalyses the reaction NAD(+) + H2O = ADP-D-ribose + nicotinamide + H(+). In terms of biological role, may regulate secretion and presynaptic differentiation through inhibition of the activity of N-type voltage-gated calcium channel. During presynaptic differentiation may regulate both synaptic vesicle accumulation in axon terminals and subsequent axon terminal remodeling. The chain is Interleukin-1 receptor accessory protein-like 1-A (il1rapl1a) from Danio rerio (Zebrafish).